Reading from the N-terminus, the 334-residue chain is Glycerol-1-phosphate dehydrogenase [NAD(P)+] (334 aa).

Residues 77–81 and 99–102 contribute to the NAD(+) site; these read GRPID and TTAS. A substrate-binding site is contributed by aspartate 104. NAD(+) is bound at residue serine 108. Aspartate 147 contributes to the substrate binding site. Zn(2+) is bound by residues aspartate 147 and histidine 225. Position 229 (histidine 229) interacts with substrate. Histidine 246 contacts Zn(2+).

This sequence belongs to the glycerol-1-phosphate dehydrogenase family. Requires Zn(2+) as cofactor.

It is found in the cytoplasm. It catalyses the reaction sn-glycerol 1-phosphate + NAD(+) = dihydroxyacetone phosphate + NADH + H(+). It carries out the reaction sn-glycerol 1-phosphate + NADP(+) = dihydroxyacetone phosphate + NADPH + H(+). It functions in the pathway membrane lipid metabolism; glycerophospholipid metabolism. In terms of biological role, catalyzes the NAD(P)H-dependent reduction of dihydroxyacetonephosphate (DHAP or glycerone phosphate) to glycerol 1-phosphate (G1P). The G1P thus generated is used as the glycerophosphate backbone of phospholipids in the cellular membranes of Archaea. This Methanococcus maripaludis (strain C5 / ATCC BAA-1333) protein is Glycerol-1-phosphate dehydrogenase [NAD(P)+].